The primary structure comprises 115 residues: Large ribosomal subunit protein uL22c (115 aa).

It belongs to the universal ribosomal protein uL22 family. In terms of assembly, part of the 50S ribosomal subunit.

It localises to the plastid. The protein localises to the chloroplast. Its function is as follows. This protein binds specifically to 23S rRNA. Functionally, the globular domain of the protein is located near the polypeptide exit tunnel on the outside of the subunit, while an extended beta-hairpin is found that lines the wall of the exit tunnel in the center of the 70S ribosome. The polypeptide is Large ribosomal subunit protein uL22c (rpl22) (Thalassiosira pseudonana (Marine diatom)).